The primary structure comprises 550 residues: Methionine--tRNA ligase (550 aa).

Residues 14 to 24 carry the 'HIGH' region motif; sequence PYANGSLHIGH. Cys145, Cys148, Cys158, and Cys161 together coordinate Zn(2+). The 'KMSKS' region signature appears at 331–335; sequence KMSKS. Lys334 is an ATP binding site.

Belongs to the class-I aminoacyl-tRNA synthetase family. MetG type 1 subfamily. As to quaternary structure, monomer. Zn(2+) is required as a cofactor.

Its subcellular location is the cytoplasm. The enzyme catalyses tRNA(Met) + L-methionine + ATP = L-methionyl-tRNA(Met) + AMP + diphosphate. Functionally, is required not only for elongation of protein synthesis but also for the initiation of all mRNA translation through initiator tRNA(fMet) aminoacylation. In Wigglesworthia glossinidia brevipalpis, this protein is Methionine--tRNA ligase.